We begin with the raw amino-acid sequence, 155 residues long: Fibroblast growth factor 2 (155 aa).

Positions 1-9 are excised as a propeptide; it reads MAAGSITTL. The interval 1–20 is disordered; that stretch reads MAAGSITTLPALPEDGGSGA. Asn36 contacts heparin. The short motif at 46–48 is the Cell attachment site; atypical element; sequence DGR. Tyr82 is subject to Phosphotyrosine; by TEC. Positions 88-90 match the Cell attachment site; atypical motif; that stretch reads DGR. Lys95 participates in a covalent cross-link: Glycyl lysine isopeptide (Lys-Gly) (interchain with G-Cter in SUMO1). Positions 128–144 are heparin-binding; sequence KRTGQYKLGPKTGPGQK.

Belongs to the heparin-binding growth factors family. In terms of assembly, monomer. Homodimer. Interacts with FGFR1, FGFR2, FGFR3 and FGFR4. Affinity between fibroblast growth factors (FGFs) and their receptors is increased by heparan sulfate glycosaminoglycans that function as coreceptors. Interacts with CSPG4, FGFBP1 and TEC. Found in a complex with FGFBP1, FGF1 and FGF2. Interacts with FGFBP3. Interacts with integrin ITGAV:ITGB3; the interaction is required for FGF2 signaling. Interacts with SNORC (via the extracellular domain). Interacts with glypican GPC3. In terms of processing, phosphorylation at Tyr-82 regulates FGF2 unconventional secretion.

It localises to the secreted. The protein resides in the nucleus. Functionally, acts as a ligand for FGFR1, FGFR2, FGFR3 and FGFR4. Also acts as an integrin ligand which is required for FGF2 signaling. Binds to integrin ITGAV:ITGB3. Plays an important role in the regulation of cell survival, cell division, cell differentiation and cell migration. Functions as a potent mitogen in vitro. Can induce angiogenesis. Mediates phosphorylation of ERK1/2 and thereby promotes retinal lens fiber differentiation. The chain is Fibroblast growth factor 2 (FGF2) from Bos taurus (Bovine).